A 409-amino-acid polypeptide reads, in one-letter code: Peptidase T (409 aa).

Residue histidine 78 participates in Zn(2+) binding. Aspartate 80 is an active-site residue. Aspartate 141 lines the Zn(2+) pocket. The active-site Proton acceptor is glutamate 175. Residues glutamate 176, aspartate 198, and histidine 380 each contribute to the Zn(2+) site.

The protein belongs to the peptidase M20B family. It depends on Zn(2+) as a cofactor.

The protein resides in the cytoplasm. It catalyses the reaction Release of the N-terminal residue from a tripeptide.. Cleaves the N-terminal amino acid of tripeptides. The chain is Peptidase T from Caldanaerobacter subterraneus subsp. tengcongensis (strain DSM 15242 / JCM 11007 / NBRC 100824 / MB4) (Thermoanaerobacter tengcongensis).